We begin with the raw amino-acid sequence, 910 residues long: Periodic tryptophan protein 2 homolog (910 aa).

WD repeat units lie at residues 12-50 (GTVY…SKTL), 53-92 (DCNY…KIYT), 94-134 (RSNK…KVYN), 144-183 (LSSD…NLFI), 188-227 (SHKG…GELV), 271-310 (GKSV…LVHN), 313-355 (VSEM…YVMK), 358-397 (AHSL…CTVT), 400-439 (EHTS…NFRT), 443-485 (PEPT…DILS), 486-523 (GHES…AETV), 525-563 (VSHE…NLGS), 586-625 (AKTK…ILKK), and 688-728 (RPEV…DPFQ). The segment at 867-910 (SKKSVKKEEEEEEDVSDESDDEDIEDESAGSDDEDSDDSVEIIE) is disordered. Positions 875–910 (EEEEEDVSDESDDEDIEDESAGSDDEDSDDSVEIIE) are enriched in acidic residues.

Belongs to the WD repeat PWP2 family.

The sequence is that of Periodic tryptophan protein 2 homolog from Caenorhabditis elegans.